The sequence spans 251 residues: MyoD family inhibitor (251 aa).

Disordered stretches follow at residues 1–64 (MSQV…PHDS), 84–167 (VTCQ…APAV), and 230–251 (RPKQNCHDPSLLPGTHGVGKEF). The segment covering 84–94 (VTCQPQGNPQG) has biased composition (polar residues). Over residues 138-154 (GSQAGRKSRGSARSASQ) the composition is skewed to low complexity.

The protein belongs to the MDFI family. Interacts (via C-terminus) with AXIN1 and LEF1. Interacts with CCNT2. Interacts (via C-terminus) with Piezo channel composed of PIEZO1 or PIEZO2; the interaction prolongs Piezo channel inactivation. In terms of tissue distribution, in the embryo, highly expressed in the sclerotome. Also expressed in the notochord, neural tube, limb buds, heart, branchial arches and head mesenchyme. In the adult, highly expressed in skeletal muscle. Expressed at lower levels in most other tissues.

Its subcellular location is the nucleus. The protein resides in the cytoplasm. Its function is as follows. Inhibits the transactivation activity of the Myod family of myogenic factors and represses myogenesis. Acts by associating with Myod family members and retaining them in the cytoplasm by masking their nuclear localization signals. Can also interfere with the DNA-binding activity of Myod family members. Plays an important role in trophoblast and chondrogenic differentiation. Regulates the transcriptional activity of TCF7L1/TCF3 by interacting directly with Tcf7l1/Tcf3 and preventing it from binding DNA. Binds to the axin complex, resulting in an increase in the level of free beta-catenin. Affects axin regulation of the WNT and JNK signaling pathways. Regulates the activity of mechanosensitive Piezo channel. This Mus musculus (Mouse) protein is MyoD family inhibitor (Mdfi).